The primary structure comprises 1045 residues: Probable beta-glucosidase E (1045 aa).

The segment at 1-74 (MAPPDSTHGG…SGSYQLRPVD (74 aa)) is disordered. At 1–163 (MAPPDSTHGG…PVKYARIWWR (163 aa)) the chain is on the cytoplasmic side. A compositionally biased stretch (basic and acidic residues) spans 11-20 (SFRDHLKTND). A helical; Signal-anchor for type II membrane protein membrane pass occupies residues 164–184 (TLLAVIVTLAVVVWGFLSFAV). The Extracellular segment spans residues 185–1045 (SHREEPKVWP…SRDLPLMGEY (861 aa)). Asparagine 226, asparagine 234, and asparagine 402 each carry an N-linked (GlcNAc...) asparagine glycan. Residue aspartate 430 is part of the active site. Asparagine 473, asparagine 512, asparagine 577, asparagine 893, asparagine 902, and asparagine 988 each carry an N-linked (GlcNAc...) asparagine glycan.

It belongs to the glycosyl hydrolase 3 family.

It localises to the cell membrane. The catalysed reaction is Hydrolysis of terminal, non-reducing beta-D-glucosyl residues with release of beta-D-glucose.. It participates in glycan metabolism; cellulose degradation. Beta-glucosidases are one of a number of cellulolytic enzymes involved in the degradation of cellulosic biomass. Catalyzes the last step releasing glucose from the inhibitory cellobiose. In Neosartorya fischeri (strain ATCC 1020 / DSM 3700 / CBS 544.65 / FGSC A1164 / JCM 1740 / NRRL 181 / WB 181) (Aspergillus fischerianus), this protein is Probable beta-glucosidase E (bglE).